The following is a 348-amino-acid chain: Dihydroorotase (348 aa).

Zn(2+) is bound by residues H17 and H19. Residues 19 to 21 (HLR) and N45 each bind substrate. Residues K103, H140, and H178 each contribute to the Zn(2+) site. At K103 the chain carries N6-carboxylysine. H140 lines the substrate pocket. L223 serves as a coordination point for substrate. D251 is a binding site for Zn(2+). The active site involves D251. H255 and A267 together coordinate substrate.

The protein belongs to the metallo-dependent hydrolases superfamily. DHOase family. Class II DHOase subfamily. Homodimer. Zn(2+) is required as a cofactor.

The catalysed reaction is (S)-dihydroorotate + H2O = N-carbamoyl-L-aspartate + H(+). It participates in pyrimidine metabolism; UMP biosynthesis via de novo pathway; (S)-dihydroorotate from bicarbonate: step 3/3. Functionally, catalyzes the reversible cyclization of carbamoyl aspartate to dihydroorotate. The chain is Dihydroorotase from Salmonella paratyphi B (strain ATCC BAA-1250 / SPB7).